The following is a 395-amino-acid chain: ATP phosphoribosyltransferase regulatory subunit (395 aa).

The protein belongs to the class-II aminoacyl-tRNA synthetase family. HisZ subfamily. In terms of assembly, heteromultimer composed of HisG and HisZ subunits.

Its subcellular location is the cytoplasm. It participates in amino-acid biosynthesis; L-histidine biosynthesis; L-histidine from 5-phospho-alpha-D-ribose 1-diphosphate: step 1/9. In terms of biological role, required for the first step of histidine biosynthesis. May allow the feedback regulation of ATP phosphoribosyltransferase activity by histidine. The sequence is that of ATP phosphoribosyltransferase regulatory subunit from Pseudomonas fluorescens (strain Pf0-1).